We begin with the raw amino-acid sequence, 333 residues long: Tetraacyldisaccharide 4'-kinase (333 aa).

Residue Thr-55–Thr-62 coordinates ATP.

Belongs to the LpxK family.

The enzyme catalyses a lipid A disaccharide + ATP = a lipid IVA + ADP + H(+). It functions in the pathway glycolipid biosynthesis; lipid IV(A) biosynthesis; lipid IV(A) from (3R)-3-hydroxytetradecanoyl-[acyl-carrier-protein] and UDP-N-acetyl-alpha-D-glucosamine: step 6/6. Its function is as follows. Transfers the gamma-phosphate of ATP to the 4'-position of a tetraacyldisaccharide 1-phosphate intermediate (termed DS-1-P) to form tetraacyldisaccharide 1,4'-bis-phosphate (lipid IVA). The polypeptide is Tetraacyldisaccharide 4'-kinase (Pectobacterium atrosepticum (strain SCRI 1043 / ATCC BAA-672) (Erwinia carotovora subsp. atroseptica)).